We begin with the raw amino-acid sequence, 407 residues long: MSKALKGDVPVSSSFEEKMKALEAARLQIEKQFGQGSLMKLGKDDAVQGVEVIPTGNILLDEALGIGGYPRGRIIEIFGPESSGKTTLALHAVAEAQKRGGIAAFIDAEHALDPQYAKDLGVSVGDLWISQPDTGEQALEIAESLVRSGAVDIIVVDSVAALTPQAEIQGDMGDAHVGLIARLMSQALRKLTSIINKSKCTLIFINQLRMKIGIMFGNPETTTGGIALKFYSSVRIEVRKVETLSRGDEEAWGNKVRIRIVKNKMAPPFRKVETEILFGKGFSAFSCLLDAAVKQEIIEKKGAWYAYREEKIGQGRDNAVGFLQQNMDITLEIERAVRTKLFPKQAFISSFQEHRPALSLEASPEESDAKTLRRXASRGAGASSSRVQEGSAANDHFQDESTTAKLL.

Gly-79–Thr-86 lines the ATP pocket. Positions Leu-358–Leu-407 are disordered. A compositionally biased stretch (low complexity) spans Ser-377–Arg-386.

It belongs to the RecA family.

It localises to the cytoplasm. In terms of biological role, can catalyze the hydrolysis of ATP in the presence of single-stranded DNA, the ATP-dependent uptake of single-stranded DNA by duplex DNA, and the ATP-dependent hybridization of homologous single-stranded DNAs. It interacts with LexA causing its activation and leading to its autocatalytic cleavage. The protein is Protein RecA of Treponema pallidum (strain Nichols).